We begin with the raw amino-acid sequence, 361 residues long: Histidinol-phosphate aminotransferase (361 aa).

Positions 26 to 45 (GMDPEDLTKLSSNENPHGPS) are disordered. Lys-222 is subject to N6-(pyridoxal phosphate)lysine.

This sequence belongs to the class-II pyridoxal-phosphate-dependent aminotransferase family. Histidinol-phosphate aminotransferase subfamily. Pyridoxal 5'-phosphate serves as cofactor.

It catalyses the reaction L-histidinol phosphate + 2-oxoglutarate = 3-(imidazol-4-yl)-2-oxopropyl phosphate + L-glutamate. It participates in amino-acid biosynthesis; L-histidine biosynthesis; L-histidine from 5-phospho-alpha-D-ribose 1-diphosphate: step 7/9. This is Histidinol-phosphate aminotransferase (hisC) from Haloferax volcanii (strain ATCC 29605 / DSM 3757 / JCM 8879 / NBRC 14742 / NCIMB 2012 / VKM B-1768 / DS2) (Halobacterium volcanii).